The following is a 623-amino-acid chain: MATEHVNGNGTEEPMDTTSAVIHSENFQTLLDAGLPQKVAEKLDEIYVAGLVAHSDLDERAIEALKEFNEDGALAVLQQFKDSDLSHVQNKSAFLCGVMKTYRQREKQGTKVADSSKGPDEAKIKALLERTGYTLDVTTGQRKYGGPPPDSVYSGQQPSVGTEIFVGKIPRDLFEDELVPLFEKAGPIWDLRLMMDPLTGLNRGYAFVTFCTKEAAQEAVKLYNNHEIRSGKHIGVCISVANNRLFVGSIPKSKTKEQILEEFSKVTEGLTDVILYHQPDDKKKNRGFCFLEYEDHKTAAQARRRLMSGKVKVWGNVGTVEWADPIEDPDPEVMAKVKVLFVRNLANTVTEEILEKSFSQFGKLERVKKLKDYAFIHFDERDGAVKAMEEMNGKDLEGENIEIVFAKPPDQKRKERKAQRQAAKNQMYDDYYYYGPPHMPPPTRGRGRGGRGGYGYPPDYYGYEDYYDYYGYDYHNYRGGYEDPYYGYEDFQVGARGRGGRGARGAAPSRGRGAAPPRGRAGYSQRGGPGSARGVRGARGGAQQQRGRGVRGARGGRGGNVGGKRKADGYNQPDTKRRQTNNQNWGSQPIAQQPLQGGDHSGNYGYKSENQEFYQDTFGQQWK.

An N-acetylalanine modification is found at A2. A Phosphoserine modification is found at S159. RRM domains lie at 162–241 (TEIF…ISVA), 243–325 (NRLF…WADP), and 338–408 (KVLF…FAKP). K168 participates in a covalent cross-link: Glycyl lysine isopeptide (Lys-Gly) (interchain with G-Cter in SUMO2). The residue at position 221 (K221) is an N6-acetyllysine. K363 is modified (N6-acetyllysine). The residue at position 373 (Y373) is a Phosphotyrosine. The segment at 400–561 (NIEIVFAKPP…GARGGRGGNV (162 aa)) is interaction with APOBEC1. Residue R444 is modified to Asymmetric dimethylarginine; by PRMT1; alternate. Residue R444 is modified to Omega-N-methylarginine; by PRMT1; alternate. Repeat copies occupy residues 448–450 (RGG), 451–453 (RGG), 460–464 (YYGYE), 469–472 (YYGY), 478–480 (RGG), and 485–488 (YYGY). The interval 448-559 (RGGRGGYGYP…VRGARGGRGG (112 aa)) is 8 X 3 AA repeats of R-G-G. The 3 X 4 AA repeats of Y-Y-G-Y stretch occupies residues 460–488 (YYGYEDYYDYYGYDYHNYRGGYEDPYYGY). Omega-N-methylarginine; by PRMT1 is present on R496. Residues 497–623 (GRGGRGARGA…YQDTFGQQWK (127 aa)) form a disordered region. One copy of the 1-4 repeat lies at 498–500 (RGG). The segment covering 504–522 (RGAAPSRGRGAAPPRGRAG) has biased composition (low complexity). At R510 the chain carries Asymmetric dimethylarginine; by PRMT1. R518 bears the Asymmetric dimethylarginine; by PRMT1; alternate mark. R518 bears the Omega-N-methylarginine; by PRMT1; alternate mark. An interaction with SMN region spans residues 518–549 (RGRAGYSQRGGPGSARGVRGARGGAQQQRGRG). R526 is modified (asymmetric dimethylarginine; alternate). R526 is subject to Omega-N-methylarginine; alternate. Residues 526–528 (RGG) form a 1-5 repeat. Asymmetric dimethylarginine; by PRMT1; alternate is present on residues R536 and R539. R536 and R539 each carry omega-N-methylarginine; by PRMT1; alternate. 3 repeat units span residues 539-541 (RGG), 554-556 (RGG), and 557-559 (RGG). The span at 550-562 (VRGARGGRGGNVG) shows a compositional bias: gly residues. The short motif at 564–578 (KRKADGYNQPDTKRR) is the Bipartite nuclear localization signal element. The span at 580–595 (TNNQNWGSQPIAQQPL) shows a compositional bias: polar residues. The residue at position 587 (S587) is a Phosphoserine. K607 participates in a covalent cross-link: Glycyl lysine isopeptide (Lys-Gly) (interchain with G-Cter in SUMO2). Residues 611 to 623 (QEFYQDTFGQQWK) show a composition bias toward polar residues.

Identified in the spliceosome C complex. Component of the coding region determinant (CRD)-mediated complex, composed of DHX9, HNRNPU, IGF2BP1, SYNCRIP and YBX1. Identified in a mRNP complex, at least composed of DHX9, DDX3X, ELAVL1, HNRNPU, IGF2BP1, ILF3, PABPC1, PCBP2, PTBP2, STAU1, STAU2, SYNCRIP and YBX1. Identified in a mRNP granule complex, at least composed of ACTB, ACTN4, DHX9, ERG, HNRNPA1, HNRNPA2B1, HNRNPAB, HNRNPD, HNRNPL, HNRNPR, HNRNPU, HSPA1, HSPA8, IGF2BP1, ILF2, ILF3, NCBP1, NCL, PABPC1, PABPC4, PABPN1, RPLP0, RPS3, RPS3A, RPS4X, RPS8, RPS9, SYNCRIP, YBX1 and untranslated mRNAs. Interacts with GTPBP1. Isoform 1 is a component of the APOB mRNA editosome complex. Isoform 1 interacts with APOBEC1 and A1CF. Part of a complex associated with the FOS mCRD domain and consisting of PABPC1, PAIP1, CSDE1/UNR, HNRPD and SYNCRIP. Isoform 2 interacts with HNRPR. Interacts with POLR2A hyperphosphorylated C-terminal domain. Interacts with HABP4. Identified in a histone pre-mRNA complex, at least composed of ERI1, LSM11, SLBP, SNRPB, SYNCRIP and YBX1. Isoform 1 and isoform 2 interact with SMN. Isoform 2 interacts through its C-terminal domain with SYT7, SYT8 and SYT9. The non-phosphorylated and phosphorylated forms are colocalized with PAIP1 in polysomes. Post-translationally, phosphorylated on tyrosine. The membrane-bound form found in microsomes is phosphorylated in vitro by insulin receptor tyrosine kinase (INSR). Phosphorylation is inhibited upon binding to RNA, whereas the cytoplasmic form is poorly phosphorylated. As to expression, ubiquitous. Detected in heart, brain, spleen, lung, liver, skeletal muscle, adipocytes, kidney and testis.

The protein localises to the nucleus. Its subcellular location is the nucleoplasm. The protein resides in the microsome. It localises to the cytoplasm. Its function is as follows. Heterogeneous nuclear ribonucleoprotein (hnRNP) implicated in mRNA processing mechanisms. Component of the CRD-mediated complex that promotes MYC mRNA stability. Isoform 1 and isoform 2 are associated in vitro with pre-mRNA, splicing intermediates and mature mRNA protein complexes. Isoform 1 binds to apoB mRNA AU-rich sequences. Isoform 1 is part of the APOB mRNA editosome complex and may modulate the postranscriptional C to U RNA-editing of the APOB mRNA through either by binding to A1CF (APOBEC1 complementation factor), to APOBEC1 or to RNA itself. May be involved in translationally coupled mRNA turnover. Implicated with other RNA-binding proteins in the cytoplasmic deadenylation/translational and decay interplay of the FOS mRNA mediated by the major coding-region determinant of instability (mCRD) domain. Interacts in vitro preferentially with poly(A) and poly(U) RNA sequences. Isoform 2 may be involved in cytoplasmic vesicle-based mRNA transport through interaction with synaptotagmins. The protein is Heterogeneous nuclear ribonucleoprotein Q (Syncrip) of Mus musculus (Mouse).